The sequence spans 362 residues: 3-dehydroquinate synthase (362 aa).

NAD(+) is bound by residues 71 to 76 (DGEQYK), 105 to 109 (GVVGD), 129 to 130 (TT), K142, K151, and 169 to 172 (CLKT). The Zn(2+) site is built by E184, H248, and H265.

Belongs to the sugar phosphate cyclases superfamily. Dehydroquinate synthase family. Co(2+) is required as a cofactor. The cofactor is Zn(2+). It depends on NAD(+) as a cofactor.

The protein localises to the cytoplasm. The catalysed reaction is 7-phospho-2-dehydro-3-deoxy-D-arabino-heptonate = 3-dehydroquinate + phosphate. Its pathway is metabolic intermediate biosynthesis; chorismate biosynthesis; chorismate from D-erythrose 4-phosphate and phosphoenolpyruvate: step 2/7. Catalyzes the conversion of 3-deoxy-D-arabino-heptulosonate 7-phosphate (DAHP) to dehydroquinate (DHQ). This Yersinia pseudotuberculosis serotype O:1b (strain IP 31758) protein is 3-dehydroquinate synthase.